We begin with the raw amino-acid sequence, 207 residues long: A-type ATP synthase subunit E (207 aa).

Belongs to the V-ATPase E subunit family. Has multiple subunits with at least A(3), B(3), C, D, E, F, H, I and proteolipid K(x).

Its subcellular location is the cell membrane. Component of the A-type ATP synthase that produces ATP from ADP in the presence of a proton gradient across the membrane. The sequence is that of A-type ATP synthase subunit E from Hyperthermus butylicus (strain DSM 5456 / JCM 9403 / PLM1-5).